The chain runs to 153 residues: MKIGIADTTFSRINMGKIAIDELRKISSIPYERYTVPGIKDLPIAAKKLLEEKGCDIVITLGWVGGTQKDMLSYIVLSMGLVIVQLMTNKHVIDVTIHEDEAEDEKTLMMVAENRVREHVRNAVDLLVNPKRLQKLAGTGQRQGYPDVGPILK.

It belongs to the DMRL synthase family.

The catalysed reaction is 2 6,7-dimethyl-8-(1-D-ribityl)lumazine + H(+) = 5-amino-6-(D-ribitylamino)uracil + riboflavin. It participates in cofactor biosynthesis; riboflavin biosynthesis; riboflavin from 2-hydroxy-3-oxobutyl phosphate and 5-amino-6-(D-ribitylamino)uracil: step 2/2. This chain is Riboflavin synthase (ribC), found in Archaeoglobus fulgidus (strain ATCC 49558 / DSM 4304 / JCM 9628 / NBRC 100126 / VC-16).